The primary structure comprises 355 residues: MATLNPFDLLDDDAEDPSQLAVAIEKIDKSKKSGQVSSLPAKSAPKLPSKPLPPAQAVREARSDAPRGGGGRGGFNRGRGGYNRDDGNNGYSGGYTKPSGEGDVSKSSYERRGGGGAPRGSFRGEGGGPGGGRRGGFSNEGGDGERPRRAFERRSGTGRGSDFKRDGSGRGNWGTPGEEIAAETEAVAGVETEKDVGEKPAVDDVAADANKEDTVVEEKEPEDKEMTLDEYEKILEEKKKALQSLTTSERKVDTKVFESMQQLSNKKSNDEIFIKLGSDKDKRKDDKEEKAKKAVSINEFLKPAEGGNYYRGGRGGRGRGGRGRGGVSSGESGGYRNEAAPAIGDAAQFPSLGGK.

Ala2 carries the N-acetylalanine modification. Residues 26-225 are disordered; the sequence is KIDKSKKSGQ…VEEKEPEDKE (200 aa). Positions 37 to 47 are enriched in low complexity; sequence SSLPAKSAPKL. 2 stretches are compositionally biased toward gly residues: residues 67–81 and 114–141; these read RGGGGRGGFNRGRGG and GGGAPRGSFRGEGGGPGGGRRGGFSNEG. The Nuclear localization signal signature appears at 132–139; the sequence is GRRGGFSN. The span at 143 to 168 shows a compositional bias: basic and acidic residues; sequence DGERPRRAFERRSGTGRGSDFKRDGS. Positions 145-155 match the Arginine-rich RNA-binding motif E-R-P-R-R-X-[F/Y]-[E/D]-R-R-S motif; sequence ERPRRAFERRS. Residues 177 to 190 show a composition bias toward low complexity; sequence GEEIAAETEAVAGV. Basic and acidic residues-rich tracts occupy residues 191–202 and 209–225; these read ETEKDVGEKPAV and ANKEDTVVEEKEPEDKE. Positions 234-289 constitute an FF domain; it reads ILEEKKKALQSLTTSERKVDTKVFESMQQLSNKKSNDEIFIKLGSDKDKRKDDKEE. Ser268 bears the Phosphoserine mark. Basic and acidic residues predominate over residues 277–292; the sequence is GSDKDKRKDDKEEKAK. A disordered region spans residues 277 to 355; it reads GSDKDKRKDD…AAQFPSLGGK (79 aa). A compositionally biased stretch (gly residues) spans 323-333; it reads GRGGVSSGESG. The residue at position 351 (Ser351) is a Phosphoserine.

It belongs to the SERBP1-HABP4 family. As to expression, expressed in seedlings, leaves, roots, inflorescences, and siliques. Constitutively expressed in seedlings and roots.

Its subcellular location is the cytoplasm. It localises to the perinuclear region. The protein resides in the nucleus. Ribosome-binding protein that acts as a regulator of mRNA translation by promoting ribosome inactivation. Binds RNA. Regulates responses to abscisic acid (ABA). Promotes stomata closure in drought conditions. Involved in resistance to salt and drought stresses via the accumulation of Pro. In Arabidopsis thaliana (Mouse-ear cress), this protein is RGG repeats nuclear RNA binding protein A.